A 428-amino-acid chain; its full sequence is Elongation factor 1-alpha (428 aa).

Residues 5 to 225 (KPILNVAFIG…DAFQPPEKPT (221 aa)) form the tr-type G domain. Residues 14–21 (GHVDAGKS) form a G1 region. 14 to 21 (GHVDAGKS) is a binding site for GTP. Serine 21 serves as a coordination point for Mg(2+). The interval 70–74 (GVTID) is G2. The tract at residues 91 to 94 (DCPG) is G3. Residues 91 to 95 (DCPGH) and 149 to 152 (NKMD) contribute to the GTP site. A G4 region spans residues 149–152 (NKMD). A G5 region spans residues 189-191 (ASL).

This sequence belongs to the TRAFAC class translation factor GTPase superfamily. Classic translation factor GTPase family. EF-Tu/EF-1A subfamily.

Its subcellular location is the cytoplasm. It catalyses the reaction GTP + H2O = GDP + phosphate + H(+). GTP hydrolase that promotes the GTP-dependent binding of aminoacyl-tRNA to the A-site of ribosomes during protein biosynthesis. This Methanococcus maripaludis (strain C5 / ATCC BAA-1333) protein is Elongation factor 1-alpha.